We begin with the raw amino-acid sequence, 203 residues long: MQPMTRNSRNSPGSRFPGAFAPEPDMDEPKSKSQKKRDMTALQALGAELEALAKDRLARVPMPEALADAIHEARRTTSHEGKRRQMQFVGKVMRGLEDDEVEAIRAALEGFKGTSKAETARMHLIERWRELLLADDAALTRFLAEHPGTDVQTVRNIIRSARREKELGKPPRYFRELFQAIKAALDEKDSAAGEQPPTPEPEA.

Over residues 1–13 the composition is skewed to polar residues; that stretch reads MQPMTRNSRNSPG. Positions 1–39 are disordered; sequence MQPMTRNSRNSPGSRFPGAFAPEPDMDEPKSKSQKKRDM. The segment covering 27–39 has biased composition (basic and acidic residues); it reads DEPKSKSQKKRDM.

Belongs to the DarP family.

Its subcellular location is the cytoplasm. In terms of biological role, member of a network of 50S ribosomal subunit biogenesis factors which assembles along the 30S-50S interface, preventing incorrect 23S rRNA structures from forming. Promotes peptidyl transferase center (PTC) maturation. The polypeptide is Dual-action ribosomal maturation protein DarP (Cupriavidus pinatubonensis (strain JMP 134 / LMG 1197) (Cupriavidus necator (strain JMP 134))).